The primary structure comprises 123 residues: Small ribosomal subunit protein uS13 (123 aa).

The segment at glycine 94 to lysine 123 is disordered. Residues alanine 106 to lysine 123 show a composition bias toward basic residues.

This sequence belongs to the universal ribosomal protein uS13 family. In terms of assembly, part of the 30S ribosomal subunit. Forms a loose heterodimer with protein S19. Forms two bridges to the 50S subunit in the 70S ribosome.

Its function is as follows. Located at the top of the head of the 30S subunit, it contacts several helices of the 16S rRNA. In the 70S ribosome it contacts the 23S rRNA (bridge B1a) and protein L5 of the 50S subunit (bridge B1b), connecting the 2 subunits; these bridges are implicated in subunit movement. Contacts the tRNAs in the A and P-sites. The sequence is that of Small ribosomal subunit protein uS13 from Mycoplasmopsis agalactiae (strain NCTC 10123 / CIP 59.7 / PG2) (Mycoplasma agalactiae).